The following is a 339-amino-acid chain: 1-aminocyclopropane-1-carboxylate deaminase (339 aa).

Lysine 52 is subject to N6-(pyridoxal phosphate)lysine. Residue serine 79 is the Nucleophile of the active site.

It belongs to the ACC deaminase/D-cysteine desulfhydrase family. In terms of assembly, homotrimer. Pyridoxal 5'-phosphate serves as cofactor.

It carries out the reaction 1-aminocyclopropane-1-carboxylate + H2O = 2-oxobutanoate + NH4(+). In terms of biological role, catalyzes a cyclopropane ring-opening reaction, the irreversible conversion of 1-aminocyclopropane-1-carboxylate (ACC) to ammonia and alpha-ketobutyrate. Allows growth on ACC as a nitrogen source. This Rhizobium leguminosarum bv. viciae protein is 1-aminocyclopropane-1-carboxylate deaminase.